The following is a 616-amino-acid chain: Chaperone protein HscA (616 aa).

It belongs to the heat shock protein 70 family.

Functionally, chaperone involved in the maturation of iron-sulfur cluster-containing proteins. Has a low intrinsic ATPase activity which is markedly stimulated by HscB. Involved in the maturation of IscU. This chain is Chaperone protein HscA, found in Shigella boydii serotype 18 (strain CDC 3083-94 / BS512).